Here is a 309-residue protein sequence, read N- to C-terminus: Type II methyltransferase M.HgiDI (309 aa).

The region spanning 1 to 297 (MKTIDLFAGC…TSLQAYLNQP (297 aa)) is the SAM-dependent MTase C5-type domain. The active site involves cysteine 75.

Belongs to the class I-like SAM-binding methyltransferase superfamily. C5-methyltransferase family.

It carries out the reaction a 2'-deoxycytidine in DNA + S-adenosyl-L-methionine = a 5-methyl-2'-deoxycytidine in DNA + S-adenosyl-L-homocysteine + H(+). Its function is as follows. A methylase that recognizes the double-stranded sequence 5'-GRCGYC-3', methylates C-? on both strands, and protects the DNA from cleavage by the HgiDI endonuclease. The chain is Type II methyltransferase M.HgiDI from Herpetosiphon aurantiacus (Herpetosiphon giganteus).